Consider the following 296-residue polypeptide: Formamidopyrimidine-DNA glycosylase (296 aa).

P2 (schiff-base intermediate with DNA) is an active-site residue. E3 (proton donor) is an active-site residue. The Proton donor; for beta-elimination activity role is filled by K61. 3 residues coordinate DNA: H104, R123, and K169. Residues 255 to 289 form an FPG-type zinc finger; the sequence is DAYGREGEPCRRCGAIMRRDKFMNRSSFYCPRCQP. Catalysis depends on R279, which acts as the Proton donor; for delta-elimination activity.

This sequence belongs to the FPG family. As to quaternary structure, monomer. Zn(2+) serves as cofactor.

It catalyses the reaction Hydrolysis of DNA containing ring-opened 7-methylguanine residues, releasing 2,6-diamino-4-hydroxy-5-(N-methyl)formamidopyrimidine.. It carries out the reaction 2'-deoxyribonucleotide-(2'-deoxyribose 5'-phosphate)-2'-deoxyribonucleotide-DNA = a 3'-end 2'-deoxyribonucleotide-(2,3-dehydro-2,3-deoxyribose 5'-phosphate)-DNA + a 5'-end 5'-phospho-2'-deoxyribonucleoside-DNA + H(+). Functionally, involved in base excision repair of DNA damaged by oxidation or by mutagenic agents. Acts as a DNA glycosylase that recognizes and removes damaged bases. Has a preference for oxidized purines, such as 7,8-dihydro-8-oxoguanine (8-oxoG). Has AP (apurinic/apyrimidinic) lyase activity and introduces nicks in the DNA strand. Cleaves the DNA backbone by beta-delta elimination to generate a single-strand break at the site of the removed base with both 3'- and 5'-phosphates. The protein is Formamidopyrimidine-DNA glycosylase of Mycobacterium sp. (strain KMS).